A 328-amino-acid polypeptide reads, in one-letter code: Pantothenate kinase (328 aa).

A compositionally biased stretch (polar residues) spans 1 to 12; that stretch reads MAAPLNAQTRAP. The interval 1 to 22 is disordered; it reads MAAPLNAQTRAPQATGRAPDFS. Residue 113 to 120 participates in ATP binding; it reads GSVAVGKS.

It belongs to the prokaryotic pantothenate kinase family.

Its subcellular location is the cytoplasm. It catalyses the reaction (R)-pantothenate + ATP = (R)-4'-phosphopantothenate + ADP + H(+). Its pathway is cofactor biosynthesis; coenzyme A biosynthesis; CoA from (R)-pantothenate: step 1/5. This is Pantothenate kinase from Corynebacterium efficiens (strain DSM 44549 / YS-314 / AJ 12310 / JCM 11189 / NBRC 100395).